A 269-amino-acid chain; its full sequence is 2' cyclic ADP-D-ribose synthase AbTIR (269 aa).

Positions 31 to 99 (LKTKLSEISR…KQQKDEIEHQ (69 aa)) form a coiled coil. Residues 133–266 (PEYDLFISHA…EIAHQLADVI (134 aa)) enclose the TIR domain. 3 residues coordinate NAD(+): Ser-143, Lys-172, and Lys-202. Glu-208 is a catalytic residue. An NAD(+)-binding site is contributed by Lys-245.

Homodimer. In the presence of NAD(+) analog 8-amino-isoquinoline adenine dinucleotide (3AD) forms filaments with 3AD between monomers; conformational changes occur upon 3AD binding.

The enzyme catalyses NAD(+) = 2'cADPR + nicotinamide + H(+). The catalysed reaction is NAD(+) + H2O = ADP-D-ribose + nicotinamide + H(+). It catalyses the reaction NADP(+) + H2O = ADP-D-ribose 2'-phosphate + nicotinamide + H(+). Its function is as follows. NAD(+) hydrolase (NADase) that catalyzes cleavage of NAD(+) into ADP-D-ribose (ADPR) and nicotinamide. In addition to ADPR, also generates a cyclization variant of cyclic ADPR (cADPR), termed 2'cADPR (v-cADPR). Cleaves NADP(+), but does not cyclize the product. The chain is 2' cyclic ADP-D-ribose synthase AbTIR from Acinetobacter baumannii (strain 1295743).